The following is a 124-amino-acid chain: Large ribosomal subunit protein bL12 (124 aa).

Belongs to the bacterial ribosomal protein bL12 family. In terms of assembly, homodimer. Part of the ribosomal stalk of the 50S ribosomal subunit. Forms a multimeric L10(L12)X complex, where L10 forms an elongated spine to which 2 to 4 L12 dimers bind in a sequential fashion. Binds GTP-bound translation factors.

Forms part of the ribosomal stalk which helps the ribosome interact with GTP-bound translation factors. Is thus essential for accurate translation. The polypeptide is Large ribosomal subunit protein bL12 (Liberibacter africanus subsp. capensis).